Here is a 435-residue protein sequence, read N- to C-terminus: GTPase Der (435 aa).

EngA-type G domains are found at residues 3–167 (NIVA…KDEG) and 176–351 (PRIA…ENRG). GTP is bound by residues 9 to 16 (GRPNVGKS), 56 to 60 (DTGGY), 119 to 122 (NKSD), 182 to 189 (GRPNAGKS), 229 to 233 (DTAGI), and 294 to 297 (NKWD). In terms of domain architecture, KH-like spans 352–435 (KRIPTSELND…VPISIVYRKK (84 aa)).

The protein belongs to the TRAFAC class TrmE-Era-EngA-EngB-Septin-like GTPase superfamily. EngA (Der) GTPase family. Associates with the 50S ribosomal subunit.

In terms of biological role, GTPase that plays an essential role in the late steps of ribosome biogenesis. The sequence is that of GTPase Der from Cytophaga hutchinsonii (strain ATCC 33406 / DSM 1761 / CIP 103989 / NBRC 15051 / NCIMB 9469 / D465).